The chain runs to 454 residues: UPF0210 protein Blon_2054/BLIJ_2131 (454 aa).

The protein belongs to the UPF0210 family. As to quaternary structure, homodimer.

The sequence is that of UPF0210 protein Blon_2054/BLIJ_2131 from Bifidobacterium longum subsp. infantis (strain ATCC 15697 / DSM 20088 / JCM 1222 / NCTC 11817 / S12).